The sequence spans 434 residues: Oxysterol-binding protein homolog 4 (434 aa).

An ALPS motif region spans residues 7–29 (SSSWTSFLKSIASFNGDLSSLSA). Positions 16 to 366 (SIASFNGDLS…WQRRWFKDFD (351 aa)) are OSBP-related domain (ORD). A 1,2-diacyl-sn-glycero-3-phospho-(1D-myo-inositol 4-phosphate) is bound at residue 24–29 (LSSLSA). Q96 lines the 20-hydroxycholesterol pocket. Q96 is a binding site for 25-hydroxycholesterol. 7beta-hydroxycholesterol is bound by residues Q96 and R100. Residue Q96 participates in cholesterol binding. An ergosterol-binding site is contributed by Q96. A 1,2-diacyl-sn-glycero-3-phospho-(1D-myo-inositol 4-phosphate)-binding positions include 109–112 (KPLN), 143–144 (HH), K336, E340, and R344. T370 carries the post-translational modification Phosphothreonine. S389 is modified (phosphoserine).

This sequence belongs to the OSBP family.

It is found in the cytoplasm. The protein localises to the golgi apparatus membrane. Functionally, lipid transport protein (LTP) involved in non-vesicular transfer of lipids between membranes. Functions in phosphoinositide-coupled directional transport of various lipids by carrying the lipid molecule in a hydrophobic pocket and transferring it between membranes through the cytosol. Involved in maintenance of intracellular sterol distribution and homeostasis. Involved in lipid countertransport between the Golgi complex and membranes of the endoplasmic reticulum. Specifically exchanges sterol with phosphatidylinositol 4-phosphate (PI4P), delivering sterol to the Golgi in exchange for PI4P, which is delivered to the ER-localized PI4P phosphatase SAC1 for degradation. Thus, by maintaining a PI4P gradient at the ER/Golgi interface, SAC1 may drive PS transport. Displays a similar affinity for PI4P and sterols. Binds sterol and PI4P in a mutually exclusive manner. Involved in ergosterol transport from the plasma membrane (PM) to the ER. Mediates sterol transport from the ER to mitochondria. Involved in the negative regulation of Golgi-derived transport vesicle biogenesis. Plays a role in the positive regulation of vesicular transport of ceramide from the ER to the Golgi, negatively regulating COPII-mediated ER export of cargos. The sequence is that of Oxysterol-binding protein homolog 4 from Saccharomyces cerevisiae (strain ATCC 204508 / S288c) (Baker's yeast).